Consider the following 474-residue polypeptide: L-arabinose isomerase (474 aa).

Mn(2+)-binding residues include E306, E331, H348, and H447.

This sequence belongs to the arabinose isomerase family. The cofactor is Mn(2+).

The catalysed reaction is beta-L-arabinopyranose = L-ribulose. It participates in carbohydrate degradation; L-arabinose degradation via L-ribulose; D-xylulose 5-phosphate from L-arabinose (bacterial route): step 1/3. In terms of biological role, catalyzes the conversion of L-arabinose to L-ribulose. In Oceanobacillus iheyensis (strain DSM 14371 / CIP 107618 / JCM 11309 / KCTC 3954 / HTE831), this protein is L-arabinose isomerase.